A 2260-amino-acid polypeptide reads, in one-letter code: Reducing polyketide synthase pksF (2260 aa).

Residues 20–445 (VEPIAIVGFG…GTNAHVVLDD (426 aa)) enclose the Ketosynthase family 3 (KS3) domain. Residues Cys-194, His-329, and His-368 each act as for beta-ketoacyl synthase activity in the active site. The segment at 598-933 (FVFTGQGAQW…ECAGKLHTIG (336 aa)) is malonyl-CoA:ACP transacylase (MAT) domain. Ser-689 functions as the For malonyltransferase activity in the catalytic mechanism. The N-terminal hotdog fold stretch occupies residues 984 to 1121 (HELLGSRTPD…GYVAIEYDDR (138 aa)). Residues 984–1281 (HELLGSRTPD…FRNKLFSITA (298 aa)) form a dehydratase (DH) domain region. Residues 984 to 1306 (HELLGSRTPD…TSTIGRNSPS (323 aa)) form the PKS/mFAS DH domain. His-1016 serves as the catalytic Proton acceptor; for dehydratase activity. The tract at residues 1150-1306 (RIAIDSADIY…TSTIGRNSPS (157 aa)) is C-terminal hotdog fold. The Proton donor; for dehydratase activity role is filled by Asp-1216. An enoylreductase (ER) domain region spans residues 1544–1859 (GILKTLHYEQ…DVDVVEKIVI (316 aa)). The segment at 1882 to 2104 (PDASYLIAGA…LRFCCDPDRV (223 aa)) is ketoreductase (KR) domain. Positions 2174–2251 (QATDIVVEAI…LLAVKVAGKS (78 aa)) constitute a Carrier domain. Position 2211 is an O-(pantetheine 4'-phosphoryl)serine (Ser-2211).

Pantetheine 4'-phosphate serves as cofactor.

Functionally, reducing polyketide synthase that catalyzes the formation of a C22 intermediate attached to the ACP. Release by intramolecular hydrolysis by the enolized delta-carbonyl would give the pyrone product aslanipyrone. Alternatively, KR-mediated reduction of the beta-carbonyl of the C22 intermediate would form a beta-hydroxy thioester intermediate, which could be a substrate for a further KS-mediated condensation of an additional C2 unit to form a C24 intermediate, which cyclizes by aldol condensation followed by decarboxylation to form aslaniol. Neither aslanipyrone, aslaniol, nor their derivatives have been detected in A.solani, probably due to a low abundance and/or extensive post-PKS modification. It is assumed that the branching point from C22 to C24 is the result of KR activity on the C22 intermediate anchored to the ACP. This is Reducing polyketide synthase pksF from Alternaria solani.